An 894-amino-acid chain; its full sequence is Protein NLP9 (894 aa).

In terms of domain architecture, RWP-RK spans 517-603 (QEISGARRLE…LDSVQGVEGG (87 aa)). The stretch at 578–598 (RKINKVNRSLRKIQTVLDSVQ) forms a coiled coil. A disordered region spans residues 732–763 (NTRIERGNGTVEPNHSISSSMSDSSNSSGAVL). A compositionally biased stretch (low complexity) spans 747 to 763 (SISSSMSDSSNSSGAVL). A PB1 domain is found at 792–875 (TLTVKATYRE…HTVKFLVRDI (84 aa)).

It is found in the nucleus. Functionally, probable transcription factor. This is Protein NLP9 (NLP9) from Arabidopsis thaliana (Mouse-ear cress).